Reading from the N-terminus, the 513-residue chain is Glutamyl-tRNA(Gln) amidotransferase subunit B, mitochondrial (513 aa).

It belongs to the GatB/GatE family. GatB subfamily. As to quaternary structure, subunit of the heterotrimeric GatFAB amidotransferase (AdT) complex, composed of A, B and F subunits.

The protein resides in the mitochondrion. It catalyses the reaction L-glutamyl-tRNA(Gln) + L-glutamine + ATP + H2O = L-glutaminyl-tRNA(Gln) + L-glutamate + ADP + phosphate + H(+). Allows the formation of correctly charged Gln-tRNA(Gln) through the transamidation of misacylated Glu-tRNA(Gln) in the mitochondria. The reaction takes place in the presence of glutamine and ATP through an activated gamma-phospho-Glu-tRNA(Gln). The protein is Glutamyl-tRNA(Gln) amidotransferase subunit B, mitochondrial of Debaryomyces hansenii (strain ATCC 36239 / CBS 767 / BCRC 21394 / JCM 1990 / NBRC 0083 / IGC 2968) (Yeast).